A 689-amino-acid chain; its full sequence is Elongation factor G (689 aa).

Residues 8–283 enclose the tr-type G domain; sequence SKCRNIGIMA…AVVDFLPAPN (276 aa). GTP-binding positions include 17–24, 81–85, and 135–138; these read AHIDAGKT, DTPGH, and NKMD.

Belongs to the TRAFAC class translation factor GTPase superfamily. Classic translation factor GTPase family. EF-G/EF-2 subfamily.

Its subcellular location is the cytoplasm. Functionally, catalyzes the GTP-dependent ribosomal translocation step during translation elongation. During this step, the ribosome changes from the pre-translocational (PRE) to the post-translocational (POST) state as the newly formed A-site-bound peptidyl-tRNA and P-site-bound deacylated tRNA move to the P and E sites, respectively. Catalyzes the coordinated movement of the two tRNA molecules, the mRNA and conformational changes in the ribosome. The protein is Elongation factor G of Ehrlichia ruminantium (strain Welgevonden).